We begin with the raw amino-acid sequence, 114 residues long: Fluoride-specific ion channel FluC 1 (114 aa).

4 helical membrane passes run 3-23 (IDIKNNTFFLISLGAFLGALF), 30-50 (IFIVNLIGCFLLGFFNSLNIL), 55-75 (LTLCVGLCGSMTTFSSWMSHL), and 87-107 (FLLNSLSIVLMGVLSIALGHI). Na(+) is bound by residues glycine 63 and threonine 66.

It belongs to the fluoride channel Fluc/FEX (TC 1.A.43) family.

Its subcellular location is the cell inner membrane. The enzyme catalyses fluoride(in) = fluoride(out). Na(+) is not transported, but it plays an essential structural role and its presence is essential for fluoride channel function. Fluoride-specific ion channel. Important for reducing fluoride concentration in the cell, thus reducing its toxicity. This is Fluoride-specific ion channel FluC 1 from Prochlorococcus marinus (strain NATL2A).